The chain runs to 1748 residues: RANBP2-like and GRIP domain-containing protein 1 (1748 aa).

Threonine 14 is modified (phosphothreonine). 3 TPR repeats span residues 51–84, 575–608, and 639–672; these read PRAH…NPPQ, QKMG…LKII, and EDAH…VSYW. Positions 751-796 are disordered; it reads GPLYKNGSLRNADSEIKHSTPSPTKYSLSPSKSYKYSPKTPPRWAE. Residues 769–788 are compositionally biased toward low complexity; the sequence is STPSPTKYSLSPSKSYKYSP. One can recognise a RanBD1 1 domain in the interval 1021 to 1157; it reads HFEPVVQMPE…FEECQRLLLD (137 aa). 2 disordered regions span residues 1198-1233 and 1291-1316; these read TKVT…TLEW and AKLN…ERDG. Residues 1220 to 1229 are compositionally biased toward polar residues; sequence IKPNPENTGP. Over residues 1302 to 1314 the composition is skewed to acidic residues; the sequence is TDEESDVTQEEER. The 137-residue stretch at 1318–1454 folds into the RanBD1 2 domain; sequence YFEPVVPLPD…FDEAKTAQEK (137 aa). The span at 1565 to 1578 shows a compositional bias: polar residues; sequence NDSETSSVAQSGSE. A disordered region spans residues 1565–1606; the sequence is NDSETSSVAQSGSESKVEPKKCELSKNSDIEQSSDSKVKNLS. Positions 1579–1602 are enriched in basic and acidic residues; that stretch reads SKVEPKKCELSKNSDIEQSSDSKV. Residues 1685-1735 form the GRIP domain; that stretch reads QEESAANVEHLKNVLLQFIFLKPGSERESLLPVINTMLQLSPEEKGKLAAV.

This chain is RANBP2-like and GRIP domain-containing protein 1 (RGPD1), found in Homo sapiens (Human).